A 245-amino-acid polypeptide reads, in one-letter code: 5-oxoprolinase subunit A (245 aa).

This sequence belongs to the LamB/PxpA family. Forms a complex composed of PxpA, PxpB and PxpC.

It catalyses the reaction 5-oxo-L-proline + ATP + 2 H2O = L-glutamate + ADP + phosphate + H(+). Catalyzes the cleavage of 5-oxoproline to form L-glutamate coupled to the hydrolysis of ATP to ADP and inorganic phosphate. In Haemophilus influenzae (strain 86-028NP), this protein is 5-oxoprolinase subunit A.